Consider the following 1846-residue polypeptide: C2 domain-containing protein (1846 aa).

The segment at 16–36 (NTEKEEGKNAEINENNDPNTQ) is disordered. Residues 17–26 (TEKEEGKNAE) show a composition bias toward basic and acidic residues. The segment covering 27-36 (INENNDPNTQ) has biased composition (polar residues). Residues 497-623 (VPRYRQRGDI…FNEKNVRRNK (127 aa)) enclose the C2 domain. Composition is skewed to basic and acidic residues over residues 1193–1211 (DEHT…DNYK) and 1230–1243 (KDDH…KVSK). Disordered stretches follow at residues 1193 to 1244 (DEHT…VSKS), 1346 to 1370 (KYTI…KKQD), 1456 to 1635 (KNER…KKRV), 1652 to 1692 (NEKM…NNER), and 1827 to 1846 (EEPS…VRKN). The stretch at 1349 to 1506 (INEKRDDIKT…DENMKEEQKM (158 aa)) forms a coiled coil. Composition is skewed to basic and acidic residues over residues 1456–1474 (KNER…QKDK), 1481–1629 (ESRD…MRRE), 1652–1663 (NEKMKKKEEKEE), and 1670–1692 (KEDI…NNER). The segment covering 1834-1846 (SPQKKKIVIVRKN) has biased composition (basic residues).

The protein localises to the membrane. Its function is as follows. Binds calcium and phospholipids. Regulates microneme secretion. This Plasmodium falciparum (isolate 3D7) protein is C2 domain-containing protein.